Here is a 61-residue protein sequence, read N- to C-terminus: Outer membrane lipoprotein YnbE (61 aa).

A signal peptide spans 1–16 (MKILLAALTSSFMLVG). A lipid anchor (N-palmitoyl cysteine) is attached at C17. C17 carries the S-diacylglycerol cysteine lipid modification.

Belongs to the lipoprotein YnbE family. Interacts with the C-terminal region of the probable phospholipid transport protein YdbH.

It is found in the cell outer membrane. Functionally, involved in outer membrane lipid homeostasis. Interacts with the inner membrane protein YdbH to form a functional protein bridge connecting the inner and outer membranes of the cell. Is required for YdbH's function and may facilitate phospholipid transport through the periplasm. The protein is Outer membrane lipoprotein YnbE (ynbE) of Escherichia coli O6:H1 (strain CFT073 / ATCC 700928 / UPEC).